A 44-amino-acid polypeptide reads, in one-letter code: Omega-plectoxin-Pt1a (44 aa).

Disulfide bonds link C3/C17, C10/C23, C16/C35, C20/C42, and C25/C33. T44 is subject to Threonine amide. T44 is lipidated: O-palmitoyl threonine.

The protein belongs to the neurotoxin 02 (plectoxin) family. 02 (plectoxin) subfamily. In terms of processing, contains 5 disulfide bonds. Acylation by palmitate is required for biological activity. In terms of tissue distribution, expressed by the venom gland.

It is found in the secreted. Toxin that inhibits presynaptic voltage-gated calcium channel (Cav) in Drosophila nerve terminals, most likely through specific block of the Cav2 channel (known as Dmca1A). The polypeptide is Omega-plectoxin-Pt1a (Plectreurys tristis (Spider)).